The primary structure comprises 326 residues: Vascular endothelial growth factor D (326 aa).

The signal sequence occupies residues 1 to 21; it reads MYGEWAAVNILMMSYVYLVQG. Positions 22–93 are excised as a propeptide; it reads FSIEHRAVKD…SRSTSHRSTR (72 aa). Intrachain disulfides connect C116–C158, C147–C194, and C151–C196. N-linked (GlcNAc...) asparagine glycosylation is found at N160 and N190. The propeptide occupies 211–326; it reads SIQIPEEDQC…CRSMVFSLSP (116 aa). The stretch at 227–242 is one 1; approximate repeat; the sequence is CPVDMLWDNTKCKCVL. Positions 227 to 317 are 4 X 16 AA repeats of C-X(10)-C-X-C-X(1,3)-C; sequence CPVDMLWDNT…KHKMFHPDTC (91 aa). 2 tandem repeats follow at residues 263–278 and 282–298. N-linked (GlcNAc...) asparagine glycosylation occurs at N292. A 4; truncated repeat occupies 306–317; it reads CQKHKMFHPDTC.

This sequence belongs to the PDGF/VEGF growth factor family. Homodimer; non-covalent and antiparallel. In terms of processing, undergoes a complex proteolytic maturation which generates a variety of processed secreted forms with increased activity toward VEGFR-3 and VEGFR-2. VEGF-D first form an antiparallel homodimer linked by disulfide bonds before secretion. The fully processed VEGF-D is composed mostly of two VEGF homology domains (VHDs) bound by non-covalent interactions. As to expression, highly expressed in the spleen, kidney, lung, tongue, ovary and mammary gland.

It localises to the secreted. Functionally, growth factor active in angiogenesis, lymphangiogenesis and endothelial cell growth, stimulating their proliferation and migration and also has effects on the permeability of blood vessels. May function in the formation of the venous and lymphatic vascular systems during embryogenesis, and also in the maintenance of differentiated lymphatic endothelium in adults. Binds and activates VEGFR-3 (Flt4) receptor. This Rattus norvegicus (Rat) protein is Vascular endothelial growth factor D.